The following is a 612-amino-acid chain: Sulfite reductase [NADPH] hemoprotein beta-component (612 aa).

A disordered region spans residues 1-26 (MDDHKPIETPDGPAVDTPGIGARRYE). Residues cysteine 469, cysteine 475, cysteine 514, and cysteine 518 each contribute to the [4Fe-4S] cluster site. Cysteine 518 serves as a coordination point for siroheme.

The protein belongs to the nitrite and sulfite reductase 4Fe-4S domain family. As to quaternary structure, alpha(8)-beta(8). The alpha component is a flavoprotein, the beta component is a hemoprotein. Requires siroheme as cofactor. [4Fe-4S] cluster is required as a cofactor.

The catalysed reaction is hydrogen sulfide + 3 NADP(+) + 3 H2O = sulfite + 3 NADPH + 4 H(+). Its pathway is sulfur metabolism; hydrogen sulfide biosynthesis; hydrogen sulfide from sulfite (NADPH route): step 1/1. In terms of biological role, component of the sulfite reductase complex that catalyzes the 6-electron reduction of sulfite to sulfide. This is one of several activities required for the biosynthesis of L-cysteine from sulfate. This Methylorubrum extorquens (strain PA1) (Methylobacterium extorquens) protein is Sulfite reductase [NADPH] hemoprotein beta-component.